A 71-amino-acid polypeptide reads, in one-letter code: uncharacterized protein (71 aa).

A helical membrane pass occupies residues 37 to 57 (IGVGVSDGVSAGVGVGVAMII).

Its subcellular location is the membrane. This is an uncharacterized protein from Dictyostelium discoideum (Social amoeba).